The primary structure comprises 254 residues: Nickel import ATP-binding protein NikO (254 aa).

Positions phenylalanine 5–leucine 246 constitute an ABC transporter domain. Residue glycine 37–serine 44 participates in ATP binding.

The protein belongs to the ABC transporter superfamily. Forms an energy-coupling factor (ECF) transporter complex composed of an ATP-binding protein (A component, NikO), a transmembrane protein (T component, NikQ) and a fused possible substrate-capture protein (S component, NikMN) of unknown stoichimetry.

The protein resides in the cell inner membrane. The enzyme catalyses Ni(2+)(out) + ATP + H2O = Ni(2+)(in) + ADP + phosphate + H(+). Functionally, part of the energy-coupling factor (ECF) transporter complex NikMNQO involved in nickel import. The complex confers nickel uptake upon expression in E.coli. Shows very low activity with cobalt. Presumably responsible for energy coupling to the transport system. The chain is Nickel import ATP-binding protein NikO from Rhodobacter capsulatus (strain ATCC BAA-309 / NBRC 16581 / SB1003).